The sequence spans 378 residues: Transcription elongation factor TFIIS (378 aa).

An N-acetylmethionine modification is found at Met1. The region spanning 10–89 (EGAKKAADAA…EIWKKVVIEE (80 aa)) is the TFIIS N-terminal domain. A TFIIS central domain is found at 210–333 (VRDKIRELLV…DCERGLAAKA (124 aa)). A TFIIS-type zinc finger spans residues 336–376 (DQFKCGRCGQRKCTYYQMQTRSADEPMTTYVTCVNCDNHWK). Residues Cys340, Cys343, Cys368, and Cys371 each contribute to the Zn(2+) site.

In terms of tissue distribution, expressed in roots, leaves and flowers.

The protein resides in the nucleus. Its function is as follows. Necessary for efficient RNA polymerase II transcription elongation past template-encoded arresting sites. Involved in the control of seed dormancy and germination. This Arabidopsis thaliana (Mouse-ear cress) protein is Transcription elongation factor TFIIS.